The sequence spans 245 residues: Uridylate kinase (245 aa).

Position 14 to 17 (14 to 17 (KLSG)) interacts with ATP. Glycine 56 provides a ligand contact to UMP. ATP is bound by residues glycine 57 and arginine 61. UMP-binding positions include aspartate 76 and 137–144 (TGLPFFTT). ATP contacts are provided by threonine 164, tyrosine 170, and aspartate 173.

It belongs to the UMP kinase family. In terms of assembly, homohexamer.

Its subcellular location is the cytoplasm. The enzyme catalyses UMP + ATP = UDP + ADP. The protein operates within pyrimidine metabolism; CTP biosynthesis via de novo pathway; UDP from UMP (UMPK route): step 1/1. Inhibited by UTP. Catalyzes the reversible phosphorylation of UMP to UDP. The chain is Uridylate kinase from Syntrophobacter fumaroxidans (strain DSM 10017 / MPOB).